The primary structure comprises 261 residues: Protein-ADP-ribose hydrolase (261 aa).

One can recognise a Macro domain in the interval 74 to 261 (ADLKPVTGRG…DEALYNKLMS (188 aa)). ADP-D-ribose contacts are provided by Asp-93, Ile-94, and Asn-107. Residues Cys-113, His-118, and Cys-120 each coordinate Zn(2+). ADP-D-ribose-binding residues include Cys-120, Ile-121, Asp-122, Ser-211, Thr-212, Gly-213, and Phe-215.

This sequence belongs to the MacroD-type family. Zn-Macro subfamily. Zn(2+) serves as cofactor.

It carries out the reaction 4-O-(ADP-D-ribosyl)-L-aspartyl-[protein] + H2O = L-aspartyl-[protein] + ADP-D-ribose + H(+). ADP-ribosylhydrolase that specifically reverses the SirTM-mediated mono-ADP-ribosylation at an asparatate residue of GcvH-L, by releasing ADP-ribose from the target protein. May play a role in the regulation of the response to host-induced oxidative stress. This Treponema medium protein is Protein-ADP-ribose hydrolase.